Reading from the N-terminus, the 126-residue chain is Glycine cleavage system H protein (126 aa).

The Lipoyl-binding domain occupies 24–106 (TVTVGITDHA…YGEGWMYRIK (83 aa)). At Lys-65 the chain carries N6-lipoyllysine.

This sequence belongs to the GcvH family. The glycine cleavage system is composed of four proteins: P, T, L and H. (R)-lipoate serves as cofactor.

Functionally, the glycine cleavage system catalyzes the degradation of glycine. The H protein shuttles the methylamine group of glycine from the P protein to the T protein. The polypeptide is Glycine cleavage system H protein (Psychrobacter sp. (strain PRwf-1)).